Here is a 355-residue protein sequence, read N- to C-terminus: Methionine import ATP-binding protein MetN (355 aa).

Positions leucine 8–isoleucine 250 constitute an ABC transporter domain. Glycine 42–serine 49 provides a ligand contact to ATP.

It belongs to the ABC transporter superfamily. Methionine importer (TC 3.A.1.24) family. As to quaternary structure, the complex is composed of two ATP-binding proteins (MetN), two transmembrane proteins (MetI) and a solute-binding protein (MetQ).

The protein resides in the cell membrane. It carries out the reaction L-methionine(out) + ATP + H2O = L-methionine(in) + ADP + phosphate + H(+). The catalysed reaction is D-methionine(out) + ATP + H2O = D-methionine(in) + ADP + phosphate + H(+). Part of the ABC transporter complex MetNIQ involved in methionine import. Responsible for energy coupling to the transport system. The polypeptide is Methionine import ATP-binding protein MetN (Streptococcus thermophilus (strain ATCC BAA-250 / LMG 18311)).